Here is a 97-residue protein sequence, read N- to C-terminus: Protein YukE (97 aa).

The stretch at 21–94 (VESQEVLNQV…ESTDQDIANQ (74 aa)) forms a coiled coil.

It belongs to the WXG100 family. sagEsxA-like subfamily. In terms of assembly, homodimer.

Its subcellular location is the secreted. Required to deliver LXG toxins to target cells. This chain is Protein YukE (yukE), found in Bacillus subtilis (strain 168).